Consider the following 193-residue polypeptide: Small ribosomal subunit protein eS1 (193 aa).

Belongs to the eukaryotic ribosomal protein eS1 family.

This Sulfurisphaera tokodaii (strain DSM 16993 / JCM 10545 / NBRC 100140 / 7) (Sulfolobus tokodaii) protein is Small ribosomal subunit protein eS1.